The chain runs to 244 residues: Phosphoadenosine 5'-phosphosulfate reductase (244 aa).

Cys-239 serves as the catalytic Nucleophile; cysteine thiosulfonate intermediate.

Belongs to the PAPS reductase family. CysH subfamily.

The protein localises to the cytoplasm. The catalysed reaction is [thioredoxin]-disulfide + sulfite + adenosine 3',5'-bisphosphate + 2 H(+) = [thioredoxin]-dithiol + 3'-phosphoadenylyl sulfate. It participates in sulfur metabolism; hydrogen sulfide biosynthesis; sulfite from sulfate: step 3/3. Catalyzes the formation of sulfite from phosphoadenosine 5'-phosphosulfate (PAPS) using thioredoxin as an electron donor. The protein is Phosphoadenosine 5'-phosphosulfate reductase of Escherichia coli O157:H7.